A 104-amino-acid chain; its full sequence is DNA-binding transcriptional repressor TubR (104 aa).

2 consecutive DNA-binding regions (HTH) follow at residues 43–50 (KTAVAEMI) and 54–65 (KPTVFATVNSFY).

Homodimer. Binds to tubC DNA, the TubR-DNA complex binds to TubZ.

Its function is as follows. A DNA-binding protein that is part of the type III plasmid partition system used to ensure correct segregation of the pBtoxis plasmid. Cooperatively binds to the centromere-like site (tubC), which may seed filament formation by the TubZ polymerizing GTPase, stabilizing TubZ filaments. TubR-tubC complexes track the depolymerizing minus end of the filament, probably pulling plasmid within the cell. Required for plasmid replication. Negatively regulates levels of TubZ; its effect on RNA expression has not been shown. Specifically binds iterons, 12-bp imperfect direct repeats that function as a plasmid origin of replication. Four TubR dimers bind to tubC, forming an extended bent DNA-protein filament with protein wrapping helically around the outside of the DNA. The polypeptide is DNA-binding transcriptional repressor TubR (Bacillus thuringiensis subsp. israelensis).